Consider the following 101-residue polypeptide: Replication restart protein PriB (101 aa).

Positions 1–101 constitute an SSB domain; that stretch reads MTTNNLVLSG…IHAENVELKT (101 aa).

It belongs to the PriB family. As to quaternary structure, homodimer. Interacts with PriA and DnaT. Component of the replication restart primosome. Primosome assembly occurs via a 'hand-off' mechanism. PriA binds to replication forks, subsequently PriB then DnaT bind; DnaT then displaces ssDNA to generate the helicase loading substrate.

Its function is as follows. Involved in the restart of stalled replication forks, which reloads the replicative helicase on sites other than the origin of replication; the PriA-PriB pathway is the major replication restart pathway. During primosome assembly it facilitates complex formation between PriA and DnaT on DNA; stabilizes PriA on DNA. Stimulates the DNA unwinding activity of PriA helicase. This chain is Replication restart protein PriB, found in Shewanella baltica (strain OS223).